Reading from the N-terminus, the 322-residue chain is Nitrilase (322 aa).

The 279-residue stretch at 5–283 folds into the CN hydrolase domain; sequence VRVGAVQSEP…EAILTADIDL (279 aa). Glu45 acts as the Proton acceptor in catalysis. Lys127 is an active-site residue. Cys162 serves as the catalytic Nucleophile.

Belongs to the carbon-nitrogen hydrolase superfamily. Nitrilase family.

It carries out the reaction a nitrile + 2 H2O = a carboxylate + NH4(+). In terms of biological role, nitrilase that hydrolyzes preferentially 4-cyanopyridine. The polypeptide is Nitrilase (Talaromyces marneffei (strain ATCC 18224 / CBS 334.59 / QM 7333) (Penicillium marneffei)).